We begin with the raw amino-acid sequence, 265 residues long: MSYFDINDILAEEQKITCNFFYDAYNLGQLEEGSRDPDMKKGSKVDLPYWMALALAKSNFVSVIMPPEYQDEYKNKLIADPNVISMRLFPYYDKIGVQLSDFFGDRKLKLLLFRVFRERFLNIYSQSINLKETDISKILGNLTYQEREVFSNGYKSSNDYDKWMSRKGEKVEKNTNNLLISTSSNNKNNSSNSSNNNSNNNNNNNNNNNNNNNNNNNNNNNNSNSNSNSNSNSSNGNNNNNSQNSSYKNTQSTTVKKRKRMFDDE.

Residues 180 to 265 (ISTSSNNKNN…KKRKRMFDDE (86 aa)) form a disordered region. Over residues 183–246 (SSNNKNNSSN…NNNNNSQNSS (64 aa)) the composition is skewed to low complexity. The span at 255-265 (VKKRKRMFDDE) shows a compositional bias: basic residues.

The protein belongs to the GINS3/PSF3 family. In terms of assembly, component of the GINS complex which is a heterotetramer of gins1, gins2, gins3 and gins4.

It localises to the nucleus. In terms of biological role, the GINS complex plays an essential role in the initiation of DNA replication. The polypeptide is Probable DNA replication complex GINS protein PSF3 (gins3) (Dictyostelium discoideum (Social amoeba)).